The primary structure comprises 175 residues: Nucleoside triphosphate/diphosphate phosphatase (175 aa).

Residue arginine 23 is the Proton donor of the active site. 6 residues coordinate Mg(2+): asparagine 87, aspartate 103, aspartate 105, aspartate 107, aspartate 120, and glutamate 123.

This sequence belongs to the Ntdp family. It depends on Mg(2+) as a cofactor.

It catalyses the reaction a ribonucleoside 5'-triphosphate + H2O = a ribonucleoside 5'-diphosphate + phosphate + H(+). The enzyme catalyses a ribonucleoside 5'-diphosphate + H2O = a ribonucleoside 5'-phosphate + phosphate + H(+). Its function is as follows. Has nucleoside phosphatase activity towards nucleoside triphosphates and nucleoside diphosphates. This Shouchella clausii (strain KSM-K16) (Alkalihalobacillus clausii) protein is Nucleoside triphosphate/diphosphate phosphatase.